Reading from the N-terminus, the 466-residue chain is MAHVNHYDVIVIGSGPGGEGAAMGLTKAGLNVAIVEKESSVGGGCTHWGTIPSKALRHAVSRIIEFNSNPLFCRNNTSLHATFSDILGHAKTVIDKQTRLRQGFYDRNDCTLLFGTARFIDTHSIAVMQNDGTEETYSADKFVIATGSRPYRPSDVDFLHERIYDSDSILSLKHDPRHIIIYGAGVIGCEYASIFRGLGVKTDLINTRDRLLEFLDNEVSDALSYHFWNSGVVIRNDETYEKIEGTEDGVIIHLQSGKKMRADCLLYANGRTGNTDKLSLDVVGLESDSRGQLKVNRNYQTAVEHIYAVGDVIGYPSLASAAYDQGRFVAQAITKGQAENYLIEDIPTGIYTIPEISSVGKTEQELTAAKVPYEVGRSSFKHLARAQIAGKDVGSLKILFHRETKEILGIHCFGERAAEIIHIGQAIMEQKGQANTIEYFVNTTFNYPTMAEAYRVAALNGLNRLF.

An FAD-binding site is contributed by 36 to 45 (EKESSVGGGC).

It belongs to the class-I pyridine nucleotide-disulfide oxidoreductase family. FAD serves as cofactor.

It is found in the cytoplasm. The catalysed reaction is NAD(+) + NADPH = NADH + NADP(+). Conversion of NADPH, generated by peripheral catabolic pathways, to NADH, which can enter the respiratory chain for energy generation. The protein is Soluble pyridine nucleotide transhydrogenase of Vibrio parahaemolyticus serotype O3:K6 (strain RIMD 2210633).